The primary structure comprises 152 residues: Xanthine-guanine phosphoribosyltransferase (152 aa).

5-phospho-alpha-D-ribose 1-diphosphate contacts are provided by residues 37–38, Arg-69, and 88–96; these read RG and DDLVDTGGT. Residue Arg-69 participates in GMP binding. Residue Asp-89 coordinates Mg(2+). Guanine contacts are provided by Asp-92 and Ile-135. Asp-92 and Ile-135 together coordinate xanthine. GMP contacts are provided by residues 92-96 and 134-135; these read DTGGT and WI.

The protein belongs to the purine/pyrimidine phosphoribosyltransferase family. XGPT subfamily. In terms of assembly, homotetramer. The cofactor is Mg(2+).

The protein localises to the cell inner membrane. The enzyme catalyses GMP + diphosphate = guanine + 5-phospho-alpha-D-ribose 1-diphosphate. It carries out the reaction XMP + diphosphate = xanthine + 5-phospho-alpha-D-ribose 1-diphosphate. It catalyses the reaction IMP + diphosphate = hypoxanthine + 5-phospho-alpha-D-ribose 1-diphosphate. Its pathway is purine metabolism; GMP biosynthesis via salvage pathway; GMP from guanine: step 1/1. It functions in the pathway purine metabolism; XMP biosynthesis via salvage pathway; XMP from xanthine: step 1/1. Its function is as follows. Purine salvage pathway enzyme that catalyzes the transfer of the ribosyl-5-phosphate group from 5-phospho-alpha-D-ribose 1-diphosphate (PRPP) to the N9 position of the 6-oxopurines guanine and xanthine to form the corresponding ribonucleotides GMP (guanosine 5'-monophosphate) and XMP (xanthosine 5'-monophosphate), with the release of PPi. To a lesser extent, also acts on hypoxanthine. This is Xanthine-guanine phosphoribosyltransferase from Erwinia tasmaniensis (strain DSM 17950 / CFBP 7177 / CIP 109463 / NCPPB 4357 / Et1/99).